The following is a 500-amino-acid chain: L-2-amino-4-chloropent-4-enoate dechlorinase/desaturase (500 aa).

Lysine 311 carries the N6-(pyridoxal phosphate)lysine modification.

Belongs to the trans-sulfuration enzymes family. The cofactor is pyridoxal 5'-phosphate.

The enzyme catalyses L-2-amino-4-chloropent-4-enoate = L-propargylglycine + chloride + H(+). Its pathway is amino-acid metabolism. It participates in antibiotic biosynthesis. Involved in the biosynthesis of terminal alkyne-containing amino acids such as L-propargylglycine (Pra) and L-beta-ethynylserine, that are produced as antibiotics by S.cattleya. Catalyzes gamma-elimination of chloride from 4-chloro-allyl-L-glycine (also named L-2-amino-4-chloropent-4-enoate), followed by an isomerization, to form the terminal-alkyne product L-propargylglycine. This is L-2-amino-4-chloropent-4-enoate dechlorinase/desaturase from Streptantibioticus cattleyicolor (strain ATCC 35852 / DSM 46488 / JCM 4925 / NBRC 14057 / NRRL 8057) (Streptomyces cattleya).